Consider the following 158-residue polypeptide: Large ribosomal subunit protein uL11 (158 aa).

It belongs to the universal ribosomal protein uL11 family. In terms of assembly, part of the ribosomal stalk of the 50S ribosomal subunit. Interacts with L10 and the large rRNA to form the base of the stalk. L10 forms an elongated spine to which L12 dimers bind in a sequential fashion forming a multimeric L10(L12)X complex.

Its function is as follows. Forms part of the ribosomal stalk which helps the ribosome interact with GTP-bound translation factors. The polypeptide is Large ribosomal subunit protein uL11 (Methanocella arvoryzae (strain DSM 22066 / NBRC 105507 / MRE50)).